Here is a 461-residue protein sequence, read N- to C-terminus: tRNA modification GTPase MnmE (461 aa).

Residues Arg-27, Glu-89, and Arg-128 each contribute to the (6S)-5-formyl-5,6,7,8-tetrahydrofolate site. Residues 224-382 (GLATAIVGRP…LENAIEKLFF (159 aa)) form the TrmE-type G domain. Residue Asn-234 coordinates K(+). Residues 234–239 (NVGKSS), 253–259 (TDIAGTT), and 278–281 (DTAG) each bind GTP. Position 238 (Ser-238) interacts with Mg(2+). Residues Thr-253, Ile-255, and Thr-258 each coordinate K(+). A Mg(2+)-binding site is contributed by Thr-259. Lys-461 lines the (6S)-5-formyl-5,6,7,8-tetrahydrofolate pocket.

The protein belongs to the TRAFAC class TrmE-Era-EngA-EngB-Septin-like GTPase superfamily. TrmE GTPase family. As to quaternary structure, homodimer. Heterotetramer of two MnmE and two MnmG subunits. K(+) is required as a cofactor.

It is found in the cytoplasm. In terms of biological role, exhibits a very high intrinsic GTPase hydrolysis rate. Involved in the addition of a carboxymethylaminomethyl (cmnm) group at the wobble position (U34) of certain tRNAs, forming tRNA-cmnm(5)s(2)U34. This chain is tRNA modification GTPase MnmE, found in Lactobacillus gasseri (strain ATCC 33323 / DSM 20243 / BCRC 14619 / CIP 102991 / JCM 1131 / KCTC 3163 / NCIMB 11718 / NCTC 13722 / AM63).